A 244-amino-acid polypeptide reads, in one-letter code: 14-3-3 protein beta/alpha-B (244 aa).

N-acetylmethionine is present on methionine 1.

The protein belongs to the 14-3-3 family. As to quaternary structure, homodimer, and heterodimer with other family members.

It localises to the cytoplasm. In terms of biological role, adapter protein implicated in the regulation of a large spectrum of both general and specialized signaling pathways. Binds to a large number of partners, usually by recognition of a phosphoserine or phosphothreonine motif. Binding generally results in the modulation of the activity of the binding partner. This chain is 14-3-3 protein beta/alpha-B (ywhab-b), found in Xenopus laevis (African clawed frog).